The primary structure comprises 297 residues: Probable GTP 3',8-cyclase (297 aa).

Residues 4-227 (RYGRQIRSFR…MQNRKKYVID (224 aa)) enclose the Radical SAM core domain. Arginine 13 lines the GTP pocket. [4Fe-4S] cluster is bound by residues cysteine 20 and cysteine 24. Residue tyrosine 26 participates in S-adenosyl-L-methionine binding. Cysteine 27 serves as a coordination point for [4Fe-4S] cluster. Position 61 (lysine 61) interacts with GTP. Glycine 65 serves as a coordination point for S-adenosyl-L-methionine. A GTP-binding site is contributed by threonine 91. Serine 115 contacts S-adenosyl-L-methionine. Lysine 152 contacts GTP. The [4Fe-4S] cluster site is built by cysteine 243 and cysteine 246. 248–250 (RIR) provides a ligand contact to GTP. A [4Fe-4S] cluster-binding site is contributed by cysteine 260.

This sequence belongs to the radical SAM superfamily. MoaA family. [4Fe-4S] cluster is required as a cofactor.

The enzyme catalyses GTP + AH2 + S-adenosyl-L-methionine = (8S)-3',8-cyclo-7,8-dihydroguanosine 5'-triphosphate + 5'-deoxyadenosine + L-methionine + A + H(+). It functions in the pathway cofactor biosynthesis; molybdopterin biosynthesis. Functionally, catalyzes the cyclization of GTP to (8S)-3',8-cyclo-7,8-dihydroguanosine 5'-triphosphate. In Methanococcus maripaludis (strain DSM 14266 / JCM 13030 / NBRC 101832 / S2 / LL), this protein is Probable GTP 3',8-cyclase.